The chain runs to 436 residues: 3-ketoacyl-CoA thiolase (436 aa).

Residue Cys99 is the Acyl-thioester intermediate of the active site. Residues His392 and Cys422 each act as proton acceptor in the active site.

Belongs to the thiolase-like superfamily. Thiolase family. Heterotetramer of two alpha chains (FadJ) and two beta chains (FadI).

It is found in the cytoplasm. The enzyme catalyses an acyl-CoA + acetyl-CoA = a 3-oxoacyl-CoA + CoA. The protein operates within lipid metabolism; fatty acid beta-oxidation. Its function is as follows. Catalyzes the final step of fatty acid oxidation in which acetyl-CoA is released and the CoA ester of a fatty acid two carbons shorter is formed. The polypeptide is 3-ketoacyl-CoA thiolase (Salmonella paratyphi B (strain ATCC BAA-1250 / SPB7)).